Reading from the N-terminus, the 201-residue chain is Recombination protein RecR (201 aa).

The C4-type zinc-finger motif lies at 57–72 (CRSCRTFTEEDECNIC). The 96-residue stretch at 81 to 176 (GQLCVVEMPE…KVTRIAHGIP (96 aa)) folds into the Toprim domain.

Belongs to the RecR family.

Its function is as follows. May play a role in DNA repair. It seems to be involved in an RecBC-independent recombinational process of DNA repair. It may act with RecF and RecO. This is Recombination protein RecR from Actinobacillus pleuropneumoniae serotype 5b (strain L20).